Reading from the N-terminus, the 118-residue chain is Ig heavy chain V region X24 (118 aa).

An Ig-like domain is found at 1 to 111 (EVKLLESGGG…GYFDYWGQGT (111 aa)).

The sequence is that of Ig heavy chain V region X24 from Mus musculus (Mouse).